The following is a 284-amino-acid chain: MEEENLLNENLLHPNESSPEETQVTTVSKSKWTILVLAMILLLVYLTFGVCTYSFFRDQFSGTETNLFVDAFYFSIVTFSTVGYGDIVPSTSTTKILTIVLVSTGVVFLDYLLNRVVSHVLSLQENAILDRINKTRNRAIRDHIAEDGKIRLKWKLCLAFCAVGLCVGSGALFLHVFERLDWLDSVYLSVISVTTVGYGDKTFKTVEGRGFAVFWLLLSTIAMATLFLYLAEMRIDRTTVMKLPPSESEFIVFKLRESGRISEDDIKQIVREFENLEEVPSSGS.

A disordered region spans residues 1-21 (MEEENLLNENLLHPNESSPEE). The Cytoplasmic segment spans residues 1–31 (MEEENLLNENLLHPNESSPEETQVTTVSKSK). A helical transmembrane segment spans residues 32-52 (WTILVLAMILLLVYLTFGVCT). Residues 70–89 (DAFYFSIVTFSTVGYGDIVP) constitute an intramembrane region (pore-forming). The helical transmembrane segment at 93–113 (TTKILTIVLVSTGVVFLDYLL) threads the bilayer. Over 114 to 156 (NRVVSHVLSLQENAILDRINKTRNRAIRDHIAEDGKIRLKWKL) the chain is Cytoplasmic. Residues 157 to 177 (CLAFCAVGLCVGSGALFLHVF) traverse the membrane as a helical segment. Positions 184-203 (DSVYLSVISVTTVGYGDKTF) form an intramembrane region, pore-forming. The helical transmembrane segment at 211–231 (FAVFWLLLSTIAMATLFLYLA) threads the bilayer. The Cytoplasmic segment spans residues 232–284 (EMRIDRTTVMKLPPSESEFIVFKLRESGRISEDDIKQIVREFENLEEVPSSGS).

Belongs to the two pore domain potassium channel (TC 1.A.1.7) family. In terms of assembly, homodimer. Predominantly expressed in pollen.

The protein localises to the cell membrane. Its function is as follows. Voltage-independent, instantaneously activating, potassium-selective plasma membrane ion channel. Open rectifier. Regulated by cytoplasmic pH and extra-cellular calcium. Has some permeability for Rb(+) and NH(4)(+), but none for Na(+) or Li(+). The sequence is that of Two-pore potassium channel 4 (TPK4) from Arabidopsis thaliana (Mouse-ear cress).